We begin with the raw amino-acid sequence, 318 residues long: Ribonuclease Z (318 aa).

The Zn(2+) site is built by histidine 62, histidine 64, aspartate 66, histidine 67, histidine 139, aspartate 210, and histidine 268. Aspartate 66 serves as the catalytic Proton acceptor.

It belongs to the RNase Z family. As to quaternary structure, homodimer. The cofactor is Zn(2+).

The catalysed reaction is Endonucleolytic cleavage of RNA, removing extra 3' nucleotides from tRNA precursor, generating 3' termini of tRNAs. A 3'-hydroxy group is left at the tRNA terminus and a 5'-phosphoryl group is left at the trailer molecule.. Its function is as follows. Zinc phosphodiesterase, which displays some tRNA 3'-processing endonuclease activity. Probably involved in tRNA maturation, by removing a 3'-trailer from precursor tRNA. This is Ribonuclease Z from Microcystis aeruginosa (strain NIES-843 / IAM M-2473).